A 280-amino-acid chain; its full sequence is Large ribosomal subunit protein uL2 (280 aa).

Disordered regions lie at residues 33-55 (LTEG…RRRG) and 199-266 (DNSN…KASQ). The span at 209–219 (GRMRHKGKRPS) shows a compositional bias: basic residues.

This sequence belongs to the universal ribosomal protein uL2 family. As to quaternary structure, part of the 50S ribosomal subunit. Forms a bridge to the 30S subunit in the 70S ribosome.

Its function is as follows. One of the primary rRNA binding proteins. Required for association of the 30S and 50S subunits to form the 70S ribosome, for tRNA binding and peptide bond formation. It has been suggested to have peptidyltransferase activity; this is somewhat controversial. Makes several contacts with the 16S rRNA in the 70S ribosome. The chain is Large ribosomal subunit protein uL2 from Ruegeria sp. (strain TM1040) (Silicibacter sp.).